We begin with the raw amino-acid sequence, 597 residues long: Pheromone-processing carboxypeptidase KEX1 (597 aa).

The N-terminal stretch at 1–18 (MVTRHVLAAALAGSMTSA) is a signal peptide. At 19–508 (QRLHPTSQRA…QTGANSSQVH (490 aa)) the chain is on the lumenal side. Active-site residues include serine 186 and aspartate 377. N-linked (GlcNAc...) asparagine glycosylation is found at asparagine 395 and asparagine 425. The active site involves histidine 436. Residues asparagine 472 and asparagine 503 are each glycosylated (N-linked (GlcNAc...) asparagine). The helical transmembrane segment at 509–529 (IGIAWLWVALVIAVVSSVLAV) threads the bilayer. At 530 to 597 (CVTIVCIRNK…TSPRSRVTEV (68 aa)) the chain is on the cytoplasmic side.

The protein belongs to the peptidase S10 family.

Its subcellular location is the golgi apparatus. The protein localises to the trans-Golgi network membrane. It carries out the reaction Preferential release of a C-terminal arginine or lysine residue.. Functionally, protease with a carboxypeptidase B-like function involved in the C-terminal processing of the lysine and arginine residues from protein precursors. Promotes cell fusion and is involved in the programmed cell death. This chain is Pheromone-processing carboxypeptidase KEX1 (KEX1), found in Phytophthora infestans (strain T30-4) (Potato late blight agent).